The sequence spans 306 residues: Pantothenate kinase (306 aa).

91–98 is a binding site for ATP; it reads GSVAVGKS.

It belongs to the prokaryotic pantothenate kinase family.

The protein resides in the cytoplasm. The catalysed reaction is (R)-pantothenate + ATP = (R)-4'-phosphopantothenate + ADP + H(+). It participates in cofactor biosynthesis; coenzyme A biosynthesis; CoA from (R)-pantothenate: step 1/5. In Streptococcus thermophilus (strain CNRZ 1066), this protein is Pantothenate kinase.